The primary structure comprises 429 residues: MRSYERSKTAYEEAVKLMPGGVNSPVRAFKSVGMTPIFMARGQGAKIYDIDGNEYIDYVLSWGPLILGHANPQVVEALKRVAEQGTSFGAPTLLENELAKLVIERVPSVEIVRMVNSGTEATMSALRLARGYTKRNKIMKFEGSYHGHGDSLLIKAGSGVATLGLPDSPGVPESVAQHTITVPYNDLDSVRYAFERFGEDIAAVIVEPVAGNMGVVPPVPGFLEGLREVTKQYGALLIFDEVMTGFRVDYHCAQGYYGIEPDLTCLGKVIGGGLPVGAYGGKAEIMELVAPSGPVYQAGTLSGNPLAMTAGYETLRQLTPETYEELGRKAARLADGLHQAAEKYDIPHTINRAGSMIGFFFTNEPVVNYETAKTSDLELFAAYYREMANEGIFLPPSQFEGLFLSTAHSDDDIEYTIAAAERVFARLRG.

N6-(pyridoxal phosphate)lysine is present on K268.

Belongs to the class-III pyridoxal-phosphate-dependent aminotransferase family. HemL subfamily. As to quaternary structure, homodimer. Requires pyridoxal 5'-phosphate as cofactor.

Its subcellular location is the cytoplasm. The catalysed reaction is (S)-4-amino-5-oxopentanoate = 5-aminolevulinate. Its pathway is porphyrin-containing compound metabolism; protoporphyrin-IX biosynthesis; 5-aminolevulinate from L-glutamyl-tRNA(Glu): step 2/2. The polypeptide is Glutamate-1-semialdehyde 2,1-aminomutase 2 (Geobacillus kaustophilus (strain HTA426)).